A 723-amino-acid polypeptide reads, in one-letter code: Ribosome quality control complex subunit 1 (723 aa).

The tract at residues 21–125 (SNSNANKMTS…DKGSDDDDDD (105 aa)) is disordered. Polar residues predominate over residues 27 to 37 (KMTSGKSTAGN). Over residues 93–108 (SSRRKKNKKAKRKQKN) the composition is skewed to basic residues. Residues 109 to 118 (HTAEAAKDKG) are compositionally biased toward basic and acidic residues. Residue Ser119 is modified to Phosphoserine. Residue Thr158 is modified to Phosphothreonine. Ser160 carries the phosphoserine modification.

Belongs to the TCF25 family. As to quaternary structure, component of the ribosome quality control complex (RQC), composed of the E3 ubiquitin ligase RKR1/LTN1, RQC1 and RQC2, as well as CDC48 and its ubiquitin-binding cofactors. RQC forms a stable complex with 60S ribosomal subunits.

The protein resides in the cytoplasm. Its function is as follows. Component of the ribosome quality control complex (RQC), a ribosome-associated complex that mediates ubiquitination and extraction of incompletely synthesized nascent chains for proteasomal degradation. Within the RQC complex, RQC1 is essential for the recruitment of CDC48 to incompletely synthesized nascent polypeptides that are ubiquitinated by RKR1/LTN1. This chain is Ribosome quality control complex subunit 1, found in Saccharomyces cerevisiae (strain ATCC 204508 / S288c) (Baker's yeast).